A 481-amino-acid polypeptide reads, in one-letter code: Aspartyl/glutamyl-tRNA(Asn/Gln) amidotransferase subunit B (481 aa).

The protein belongs to the GatB/GatE family. GatB subfamily. In terms of assembly, heterotrimer of A, B and C subunits.

The enzyme catalyses L-glutamyl-tRNA(Gln) + L-glutamine + ATP + H2O = L-glutaminyl-tRNA(Gln) + L-glutamate + ADP + phosphate + H(+). It catalyses the reaction L-aspartyl-tRNA(Asn) + L-glutamine + ATP + H2O = L-asparaginyl-tRNA(Asn) + L-glutamate + ADP + phosphate + 2 H(+). In terms of biological role, allows the formation of correctly charged Asn-tRNA(Asn) or Gln-tRNA(Gln) through the transamidation of misacylated Asp-tRNA(Asn) or Glu-tRNA(Gln) in organisms which lack either or both of asparaginyl-tRNA or glutaminyl-tRNA synthetases. The reaction takes place in the presence of glutamine and ATP through an activated phospho-Asp-tRNA(Asn) or phospho-Glu-tRNA(Gln). The chain is Aspartyl/glutamyl-tRNA(Asn/Gln) amidotransferase subunit B from Carboxydothermus hydrogenoformans (strain ATCC BAA-161 / DSM 6008 / Z-2901).